Here is a 1549-residue protein sequence, read N- to C-terminus: Ferredoxin-dependent glutamate synthase (1549 aa).

The For GATase activity role is filled by C37. One can recognise a Glutamine amidotransferase type-2 domain in the interval 37-435; sequence CGVGFIAHLD…PGEMIVLDLQ (399 aa). FMN is bound at residue 1116 to 1173; the sequence is LHEVHCLLVENNLREKVILRVDGGLRTGQDVVMAALLGADEYGFGTIAMIAGGCIMAR. C1169, C1175, and C1180 together coordinate [3Fe-4S] cluster.

The protein belongs to the glutamate synthase family. As to quaternary structure, monomer. [3Fe-4S] cluster serves as cofactor. The cofactor is FAD. Requires FMN as cofactor.

It is found in the plastid. The protein resides in the chloroplast stroma. It carries out the reaction 2 oxidized [2Fe-2S]-[ferredoxin] + 2 L-glutamate = L-glutamine + 2 reduced [2Fe-2S]-[ferredoxin] + 2-oxoglutarate + 2 H(+). Its pathway is amino-acid biosynthesis; L-glutamate biosynthesis via GLT pathway; L-glutamate from 2-oxoglutarate and L-glutamine (ferredoxin route): step 1/1. The protein operates within energy metabolism; nitrogen metabolism. The chain is Ferredoxin-dependent glutamate synthase (gltB) from Cyanidium caldarium (Red alga).